The sequence spans 245 residues: 1-acyl-sn-glycerol-3-phosphate acyltransferase (245 aa).

Met-1 bears the N-formylmethionine mark. Positions 73 to 78 match the HXXXXD motif motif; that stretch reads HQNNYD.

This sequence belongs to the 1-acyl-sn-glycerol-3-phosphate acyltransferase family.

The protein localises to the cell inner membrane. It carries out the reaction a 1-acyl-sn-glycero-3-phosphate + an acyl-CoA = a 1,2-diacyl-sn-glycero-3-phosphate + CoA. The catalysed reaction is a fatty acyl-[ACP] + a 1-acyl-sn-glycero-3-phosphate = a 1,2-diacyl-sn-glycero-3-phosphate + holo-[ACP]. It functions in the pathway phospholipid metabolism; CDP-diacylglycerol biosynthesis; CDP-diacylglycerol from sn-glycerol 3-phosphate: step 2/3. Functionally, converts lysophosphatidic acid (LPA) into phosphatidic acid by incorporating an acyl moiety at the 2 position. This enzyme can utilize either acyl-CoA or acyl-ACP as the fatty acyl donor. This Escherichia coli (strain K12) protein is 1-acyl-sn-glycerol-3-phosphate acyltransferase (plsC).